A 712-amino-acid chain; its full sequence is Ribosomal RNA large subunit methyltransferase K/L (712 aa).

The THUMP domain maps to 42–153 (QALRIVMWSR…KGRASLSIDL (112 aa)).

The protein belongs to the methyltransferase superfamily. RlmKL family.

It is found in the cytoplasm. The enzyme catalyses guanosine(2445) in 23S rRNA + S-adenosyl-L-methionine = N(2)-methylguanosine(2445) in 23S rRNA + S-adenosyl-L-homocysteine + H(+). It carries out the reaction guanosine(2069) in 23S rRNA + S-adenosyl-L-methionine = N(2)-methylguanosine(2069) in 23S rRNA + S-adenosyl-L-homocysteine + H(+). Functionally, specifically methylates the guanine in position 2445 (m2G2445) and the guanine in position 2069 (m7G2069) of 23S rRNA. In Stenotrophomonas maltophilia (strain K279a), this protein is Ribosomal RNA large subunit methyltransferase K/L.